A 239-amino-acid chain; its full sequence is Heptaprenylglyceryl phosphate synthase (239 aa).

Residue Lys-12 coordinates sn-glycerol 1-phosphate. Residues Asp-14 and Thr-40 each coordinate Mg(2+). Sn-glycerol 1-phosphate is bound by residues 159–164 (YLEYSG), Gly-189, and 209–210 (GN).

Belongs to the GGGP/HepGP synthase family. Group I subfamily. Homodimer. The cofactor is Mg(2+).

The catalysed reaction is sn-glycerol 1-phosphate + all-trans-heptaprenyl diphosphate = 3-heptaprenyl-sn-glycero-1-phosphate + diphosphate. Its pathway is membrane lipid metabolism; glycerophospholipid metabolism. Its function is as follows. Prenyltransferase that catalyzes in vivo the transfer of the heptaprenyl moiety of heptaprenyl pyrophosphate (HepPP; 35 carbon atoms) to the C3 hydroxyl of sn-glycerol-1-phosphate (G1P), producing heptaprenylglyceryl phosphate (HepGP). This reaction is an ether-bond-formation step in the biosynthesis of archaea-type G1P-based membrane lipids found in Bacillales. To a much lesser extent, is also able to use geranylgeranyl diphosphate (GGPP; C20) as the prenyl donor. This Geobacillus kaustophilus (strain HTA426) protein is Heptaprenylglyceryl phosphate synthase.